Consider the following 553-residue polypeptide: Methyl-coenzyme M reductase II subunit alpha (553 aa).

Gln-150 contributes to the coenzyme F430 binding site. Coenzyme B-binding positions include Arg-228, 259–260 (KH), and Arg-273. Pros-methylhistidine is present on His-260. Arg-274 is subject to 5-methylarginine. Coenzyme M is bound at residue Tyr-335. 2-methylglutamine is present on Gln-402. Tyr-446 is a binding site for coenzyme M. The residue at position 447 (Gly-447) is a 1-thioglycine. Residue Asp-452 is modified to (Z)-2,3-didehydroaspartate. Cys-454 is modified (S-methylcysteine).

This sequence belongs to the methyl-coenzyme M reductase alpha subunit family. In terms of assembly, MCR is a hexamer of two alpha, two beta, and two gamma chains, forming a dimer of heterotrimers. Coenzyme F430 serves as cofactor. The alpha subunit contains six modified amino acids near the active site region. Is methylated on His-260, Arg-274, Gln-402 and Cys-454, probably by the action of specific S-adenosylmethionine-dependent methyltransferases. Also contains a thioglycine at position 447, forming a thiopeptide bond. Contains a didehydroaspartate residue at position 452. The methylation on C5 of Arg-274 is a post-translational methylation not essential in vivo, but which plays a role for the stability and structural integrity of MCR.

The catalysed reaction is coenzyme B + methyl-coenzyme M = methane + coenzyme M-coenzyme B heterodisulfide. It participates in one-carbon metabolism; methyl-coenzyme M reduction; methane from methyl-coenzyme M: step 1/1. Its function is as follows. Component of the methyl-coenzyme M reductase (MCR) I that catalyzes the reductive cleavage of methyl-coenzyme M (CoM-S-CH3 or 2-(methylthio)ethanesulfonate) using coenzyme B (CoB or 7-mercaptoheptanoylthreonine phosphate) as reductant which results in the production of methane and the mixed heterodisulfide of CoB and CoM (CoM-S-S-CoB). This is the final step in methanogenesis. This chain is Methyl-coenzyme M reductase II subunit alpha (mrtA), found in Methanothermobacter thermautotrophicus (strain ATCC 29096 / DSM 1053 / JCM 10044 / NBRC 100330 / Delta H) (Methanobacterium thermoautotrophicum).